We begin with the raw amino-acid sequence, 402 residues long: Protein FAM221B (402 aa).

Basic and acidic residues predominate over residues 1–35; sequence MEAHEIIEEPHITMDAEKHPPSKDPSAEDLQENHI. Disordered stretches follow at residues 1 to 205 and 378 to 402; these read MEAH…TARP and DTQKTRQRGGRPRGTDTVSNWHRPL. Composition is skewed to polar residues over residues 77-90 and 393-402; these read EPSISETPSETPTY and DTVSNWHRPL.

Belongs to the FAM221 family.

This chain is Protein FAM221B (FAM221B), found in Homo sapiens (Human).